Reading from the N-terminus, the 443-residue chain is Xaa-Pro dipeptidase (443 aa).

Mn(2+) contacts are provided by D246, D257, H339, E384, and E423.

The protein belongs to the peptidase M24B family. Bacterial-type prolidase subfamily. Mn(2+) is required as a cofactor.

It carries out the reaction Xaa-L-Pro dipeptide + H2O = an L-alpha-amino acid + L-proline. Functionally, splits dipeptides with a prolyl residue in the C-terminal position. The protein is Xaa-Pro dipeptidase of Yersinia pseudotuberculosis serotype I (strain IP32953).